Here is a 425-residue protein sequence, read N- to C-terminus: Proline--tRNA ligase (425 aa).

Belongs to the class-II aminoacyl-tRNA synthetase family. ProS type 2 subfamily. Homodimer.

The protein localises to the cytoplasm. The catalysed reaction is tRNA(Pro) + L-proline + ATP = L-prolyl-tRNA(Pro) + AMP + diphosphate. In terms of biological role, catalyzes the attachment of proline to tRNA(Pro) in a two-step reaction: proline is first activated by ATP to form Pro-AMP and then transferred to the acceptor end of tRNA(Pro). This is Proline--tRNA ligase from Wolbachia sp. subsp. Brugia malayi (strain TRS).